The following is a 426-amino-acid chain: MSEIIDIHAREILDSRGNPTIEVDVTLDDGSTGRAAVPSGASTGAYEAHEQRDGDKARYNGKGVLKAVDAVNGEICNELAGMDATEQRLVDTLMIDLDGTENKSRLGANAILGVSLAVAKAAAESSALPLYRYLGGANARILPTPMMNIINGGAHADNPVDIQEFMIMPVSAESISEAVRMGAEVFHALKKTLHDAGHNTNVGDEGGFAPNLASADEAIGFIMKSIEKAGYRPGEDIALALDAASTEFYKNGKYELAGEGKSLSSEQFGQYLADLCGRYPILSIEDGMAEDDWDGWVALTELLGDRVQLVGDDLFVTNPDRLAIGLQKGAANSILVKVNQIGTLSETLDAVELAHLHGYTAVMSHRSGETEDSTIADLAVATNCGQIKTGSLSRSDRIAKYNQLIRIEEELGPIGMYAGLARINAG.

The tract at residues 32-53 (TGRAAVPSGASTGAYEAHEQRD) is disordered. Glutamine 163 contacts (2R)-2-phosphoglycerate. Residue glutamate 205 is the Proton donor of the active site. Mg(2+) is bound by residues aspartate 242, glutamate 285, and aspartate 312. (2R)-2-phosphoglycerate-binding residues include lysine 337, arginine 366, serine 367, and lysine 388. Lysine 337 acts as the Proton acceptor in catalysis.

It belongs to the enolase family. Mg(2+) serves as cofactor.

It is found in the cytoplasm. The protein localises to the secreted. It localises to the cell surface. The enzyme catalyses (2R)-2-phosphoglycerate = phosphoenolpyruvate + H2O. The protein operates within carbohydrate degradation; glycolysis; pyruvate from D-glyceraldehyde 3-phosphate: step 4/5. In terms of biological role, catalyzes the reversible conversion of 2-phosphoglycerate (2-PG) into phosphoenolpyruvate (PEP). It is essential for the degradation of carbohydrates via glycolysis. The sequence is that of Enolase from Hyphomonas neptunium (strain ATCC 15444).